Here is a 210-residue protein sequence, read N- to C-terminus: UPF0502 protein Sama_1967 (210 aa).

The protein belongs to the UPF0502 family.

This chain is UPF0502 protein Sama_1967, found in Shewanella amazonensis (strain ATCC BAA-1098 / SB2B).